The primary structure comprises 403 residues: Argininosuccinate synthase (403 aa).

ATP is bound by residues 12 to 20 (AYSGGLDTS) and alanine 39. L-citrulline contacts are provided by tyrosine 90 and serine 95. Glycine 120 is an ATP binding site. 3 residues coordinate L-aspartate: threonine 122, asparagine 126, and aspartate 127. Residue asparagine 126 participates in L-citrulline binding. Residues arginine 130, serine 182, serine 191, glutamate 267, and tyrosine 279 each coordinate L-citrulline.

It belongs to the argininosuccinate synthase family. Type 1 subfamily. As to quaternary structure, homotetramer.

It localises to the cytoplasm. It catalyses the reaction L-citrulline + L-aspartate + ATP = 2-(N(omega)-L-arginino)succinate + AMP + diphosphate + H(+). It functions in the pathway amino-acid biosynthesis; L-arginine biosynthesis; L-arginine from L-ornithine and carbamoyl phosphate: step 2/3. This chain is Argininosuccinate synthase, found in Ruthia magnifica subsp. Calyptogena magnifica.